A 439-amino-acid polypeptide reads, in one-letter code: Ribosomal protein uS12 methylthiotransferase RimO (439 aa).

Residues 2–114 form the MTTase N-terminal domain; sequence SKLYLMSLGC…VDEMILKKTN (113 aa). Positions 11, 45, 77, 146, 150, and 153 each coordinate [4Fe-4S] cluster. One can recognise a Radical SAM core domain in the interval 132–363; that stretch reads TGSNSHAFIK…VNEVIEKSFE (232 aa).

It belongs to the methylthiotransferase family. RimO subfamily. [4Fe-4S] cluster serves as cofactor.

The protein resides in the cytoplasm. The enzyme catalyses L-aspartate(89)-[ribosomal protein uS12]-hydrogen + (sulfur carrier)-SH + AH2 + 2 S-adenosyl-L-methionine = 3-methylsulfanyl-L-aspartate(89)-[ribosomal protein uS12]-hydrogen + (sulfur carrier)-H + 5'-deoxyadenosine + L-methionine + A + S-adenosyl-L-homocysteine + 2 H(+). Its function is as follows. Catalyzes the methylthiolation of an aspartic acid residue of ribosomal protein uS12. The polypeptide is Ribosomal protein uS12 methylthiotransferase RimO (Campylobacter jejuni (strain RM1221)).